Here is a 347-residue protein sequence, read N- to C-terminus: NADH-ubiquinone oxidoreductase chain 2 (347 aa).

10 consecutive transmembrane segments (helical) span residues 3–23, 25–45, 59–79, 89–109, 149–169, 178–198, 200–220, 237–257, 274–294, and 325–345; these read PIIY…VMIS, HWLL…PVLM, YFLT…INLL, MFNP…LGLS, INPN…GWGG, IMAY…PYNT, MTIL…MLLI, MPVI…LPPL, ESII…YFYM, and LLPT…ALSS.

This sequence belongs to the complex I subunit 2 family. As to quaternary structure, core subunit of respiratory chain NADH dehydrogenase (Complex I) which is composed of 45 different subunits. Interacts with TMEM242.

Its subcellular location is the mitochondrion inner membrane. The enzyme catalyses a ubiquinone + NADH + 5 H(+)(in) = a ubiquinol + NAD(+) + 4 H(+)(out). Its function is as follows. Core subunit of the mitochondrial membrane respiratory chain NADH dehydrogenase (Complex I) which catalyzes electron transfer from NADH through the respiratory chain, using ubiquinone as an electron acceptor. Essential for the catalytic activity and assembly of complex I. The chain is NADH-ubiquinone oxidoreductase chain 2 from Sus scrofa (Pig).